The primary structure comprises 471 residues: Tyrosine--tRNA ligase, mitochondrial (471 aa).

Y71 lines the L-tyrosine pocket. Residue D75 participates in ATP binding. A 'HIGH' region motif is present at residues 76–85; sequence PTGDSLHVGH. Residues D115, Y215, Q219, D222, and Q241 each contribute to the L-tyrosine site. The ATP site is built by I268 and K278. Residues 275–279 carry the 'KMSKS' region motif; that stretch reads KLGKS. N6-acetyllysine occurs at positions 349 and 361.

The protein belongs to the class-I aminoacyl-tRNA synthetase family. In terms of assembly, homodimer.

The protein resides in the mitochondrion matrix. The enzyme catalyses tRNA(Tyr) + L-tyrosine + ATP = L-tyrosyl-tRNA(Tyr) + AMP + diphosphate + H(+). Functionally, catalyzes the attachment of tyrosine to tRNA(Tyr) in a two-step reaction: tyrosine is first activated by ATP to form Tyr-AMP and then transferred to the acceptor end of tRNA(Tyr). The sequence is that of Tyrosine--tRNA ligase, mitochondrial (Yars2) from Rattus norvegicus (Rat).